A 182-amino-acid chain; its full sequence is Transcription termination/antitermination protein NusG (182 aa).

Residues 131–163 (VGEQVRIKSGPFANQVGEVQEIEADKFKLTVLV) form the KOW domain.

This sequence belongs to the NusG family.

In terms of biological role, participates in transcription elongation, termination and antitermination. This chain is Transcription termination/antitermination protein NusG, found in Staphylococcus carnosus (strain TM300).